Reading from the N-terminus, the 251-residue chain is Imidazole glycerol phosphate synthase subunit HisF (251 aa).

Active-site residues include Asp11 and Asp130.

This sequence belongs to the HisA/HisF family. As to quaternary structure, heterodimer of HisH and HisF.

It localises to the cytoplasm. The catalysed reaction is 5-[(5-phospho-1-deoxy-D-ribulos-1-ylimino)methylamino]-1-(5-phospho-beta-D-ribosyl)imidazole-4-carboxamide + L-glutamine = D-erythro-1-(imidazol-4-yl)glycerol 3-phosphate + 5-amino-1-(5-phospho-beta-D-ribosyl)imidazole-4-carboxamide + L-glutamate + H(+). Its pathway is amino-acid biosynthesis; L-histidine biosynthesis; L-histidine from 5-phospho-alpha-D-ribose 1-diphosphate: step 5/9. Its function is as follows. IGPS catalyzes the conversion of PRFAR and glutamine to IGP, AICAR and glutamate. The HisF subunit catalyzes the cyclization activity that produces IGP and AICAR from PRFAR using the ammonia provided by the HisH subunit. This is Imidazole glycerol phosphate synthase subunit HisF from Chlorobium luteolum (strain DSM 273 / BCRC 81028 / 2530) (Pelodictyon luteolum).